The following is a 315-amino-acid chain: Malate dehydrogenase (315 aa).

Residues 10 to 15 (GSGFTG) and aspartate 34 contribute to the NAD(+) site. 2 residues coordinate substrate: arginine 85 and arginine 91. Residues asparagine 98 and 121 to 123 (LTN) contribute to the NAD(+) site. Substrate is bound by residues asparagine 123 and arginine 154. Histidine 178 acts as the Proton acceptor in catalysis.

This sequence belongs to the LDH/MDH superfamily. MDH type 3 family.

It catalyses the reaction (S)-malate + NAD(+) = oxaloacetate + NADH + H(+). Its function is as follows. Catalyzes the reversible oxidation of malate to oxaloacetate. This chain is Malate dehydrogenase, found in Symbiobacterium thermophilum (strain DSM 24528 / JCM 14929 / IAM 14863 / T).